A 384-amino-acid polypeptide reads, in one-letter code: 8-amino-7-oxononanoate synthase (384 aa).

Residue Arg21 participates in substrate binding. 108 to 109 (GF) serves as a coordination point for pyridoxal 5'-phosphate. His133 provides a ligand contact to substrate. The pyridoxal 5'-phosphate site is built by Ser179, His207, and Thr233. Lys236 carries the post-translational modification N6-(pyridoxal phosphate)lysine. Residue Thr352 participates in substrate binding.

Belongs to the class-II pyridoxal-phosphate-dependent aminotransferase family. BioF subfamily. As to quaternary structure, homodimer. Pyridoxal 5'-phosphate serves as cofactor.

It catalyses the reaction 6-carboxyhexanoyl-[ACP] + L-alanine + H(+) = (8S)-8-amino-7-oxononanoate + holo-[ACP] + CO2. Its pathway is cofactor biosynthesis; biotin biosynthesis. Catalyzes the decarboxylative condensation of pimeloyl-[acyl-carrier protein] and L-alanine to produce 8-amino-7-oxononanoate (AON), [acyl-carrier protein], and carbon dioxide. The sequence is that of 8-amino-7-oxononanoate synthase from Escherichia coli O9:H4 (strain HS).